A 238-amino-acid polypeptide reads, in one-letter code: Uridylate kinase (238 aa).

12 to 15 contacts ATP; the sequence is KLSG. A UMP-binding site is contributed by G54. ATP contacts are provided by G55 and R59. Residues D74 and 135 to 142 contribute to the UMP site; that span reads TGNPYFTT. 4 residues coordinate ATP: T162, N163, Y168, and D171.

This sequence belongs to the UMP kinase family. In terms of assembly, homohexamer.

The protein localises to the cytoplasm. The enzyme catalyses UMP + ATP = UDP + ADP. It participates in pyrimidine metabolism; CTP biosynthesis via de novo pathway; UDP from UMP (UMPK route): step 1/1. Inhibited by UTP. In terms of biological role, catalyzes the reversible phosphorylation of UMP to UDP. This chain is Uridylate kinase, found in Bradyrhizobium sp. (strain BTAi1 / ATCC BAA-1182).